The primary structure comprises 202 residues: uncharacterized protein (202 aa).

Residues threonine 10–valine 30 traverse the membrane as a helical segment.

It belongs to the bacterial sugar transferase family.

Its subcellular location is the cell membrane. Its function is as follows. May be involved in the production of the exopolysaccharide (EPS) component of the extracellular matrix during biofilm formation. EPS is responsible for the adhesion of chains of cells into bundles. This is an uncharacterized protein from Bacillus subtilis (strain 168).